Consider the following 872-residue polypeptide: Alanine--tRNA ligase (872 aa).

Residues H563, H567, C665, and H669 each coordinate Zn(2+).

This sequence belongs to the class-II aminoacyl-tRNA synthetase family. Requires Zn(2+) as cofactor.

The protein resides in the cytoplasm. The enzyme catalyses tRNA(Ala) + L-alanine + ATP = L-alanyl-tRNA(Ala) + AMP + diphosphate. In terms of biological role, catalyzes the attachment of alanine to tRNA(Ala) in a two-step reaction: alanine is first activated by ATP to form Ala-AMP and then transferred to the acceptor end of tRNA(Ala). Also edits incorrectly charged Ser-tRNA(Ala) and Gly-tRNA(Ala) via its editing domain. The chain is Alanine--tRNA ligase from Bacteroides fragilis (strain ATCC 25285 / DSM 2151 / CCUG 4856 / JCM 11019 / LMG 10263 / NCTC 9343 / Onslow / VPI 2553 / EN-2).